Here is a 198-residue protein sequence, read N- to C-terminus: Probable chemoreceptor glutamine deamidase CheD (198 aa).

It belongs to the CheD family.

The catalysed reaction is L-glutaminyl-[protein] + H2O = L-glutamyl-[protein] + NH4(+). In terms of biological role, probably deamidates glutamine residues to glutamate on methyl-accepting chemotaxis receptors (MCPs), playing an important role in chemotaxis. This Xanthomonas axonopodis pv. citri (strain 306) protein is Probable chemoreceptor glutamine deamidase CheD.